Consider the following 289-residue polypeptide: Phosphatidylserine decarboxylase proenzyme (289 aa).

Active-site charge relay system; for autoendoproteolytic cleavage activity residues include aspartate 89, histidine 146, and serine 252. The active-site Schiff-base intermediate with substrate; via pyruvic acid; for decarboxylase activity is the serine 252. Position 252 is a pyruvic acid (Ser); by autocatalysis (serine 252).

It belongs to the phosphatidylserine decarboxylase family. PSD-B subfamily. Prokaryotic type I sub-subfamily. Heterodimer of a large membrane-associated beta subunit and a small pyruvoyl-containing alpha subunit. Requires pyruvate as cofactor. Is synthesized initially as an inactive proenzyme. Formation of the active enzyme involves a self-maturation process in which the active site pyruvoyl group is generated from an internal serine residue via an autocatalytic post-translational modification. Two non-identical subunits are generated from the proenzyme in this reaction, and the pyruvate is formed at the N-terminus of the alpha chain, which is derived from the carboxyl end of the proenzyme. The autoendoproteolytic cleavage occurs by a canonical serine protease mechanism, in which the side chain hydroxyl group of the serine supplies its oxygen atom to form the C-terminus of the beta chain, while the remainder of the serine residue undergoes an oxidative deamination to produce ammonia and the pyruvoyl prosthetic group on the alpha chain. During this reaction, the Ser that is part of the protease active site of the proenzyme becomes the pyruvoyl prosthetic group, which constitutes an essential element of the active site of the mature decarboxylase.

The protein localises to the cell membrane. The enzyme catalyses a 1,2-diacyl-sn-glycero-3-phospho-L-serine + H(+) = a 1,2-diacyl-sn-glycero-3-phosphoethanolamine + CO2. Its pathway is phospholipid metabolism; phosphatidylethanolamine biosynthesis; phosphatidylethanolamine from CDP-diacylglycerol: step 2/2. Functionally, catalyzes the formation of phosphatidylethanolamine (PtdEtn) from phosphatidylserine (PtdSer). In Shewanella denitrificans (strain OS217 / ATCC BAA-1090 / DSM 15013), this protein is Phosphatidylserine decarboxylase proenzyme.